The following is a 568-amino-acid chain: Oxygen-dependent choline dehydrogenase (568 aa).

FAD is bound at residue 8–37 (DYIIIGAGSAGNTLAARLTEDAGVTVLLLE). The active-site Proton acceptor is the H477.

It belongs to the GMC oxidoreductase family. It depends on FAD as a cofactor.

The catalysed reaction is choline + A = betaine aldehyde + AH2. It catalyses the reaction betaine aldehyde + NAD(+) + H2O = glycine betaine + NADH + 2 H(+). It participates in amine and polyamine biosynthesis; betaine biosynthesis via choline pathway; betaine aldehyde from choline (cytochrome c reductase route): step 1/1. Functionally, involved in the biosynthesis of the osmoprotectant glycine betaine. Catalyzes the oxidation of choline to betaine aldehyde and betaine aldehyde to glycine betaine at the same rate. This is Oxygen-dependent choline dehydrogenase from Pseudomonas syringae pv. tomato (strain ATCC BAA-871 / DC3000).